Reading from the N-terminus, the 947-residue chain is MHKFRYSLHQHYSKRNSSDKSKDSPISQNSNEENDSTKLSSSSLQDLHDDLDDIYNNYTLAQGTNNNSVDTLDSENNQAINKFIDKPPAIHGMEPQLPVMHVSSRLSSLGNTTNETGESIAKSAPGTPLSSHSFDFRPHHPRAVTNSSLNVLLDTPNVSSEFNHLVDQTPPNESVERFDDSNNTVDNTEEEENNDDTDEIPKSETLKQNEENWEKKGAAVKTIKTMDGEMKTIRRNVTDFKFGKELGEGSYSTVILATDKITGKQYAVKVLDKRHIIKEKKVKYVNIEKHALNRLSNRLGVISLYFTFQDKDSLYFVLDYASNGELLTLIKRYNTLNEECTRHFGAQILDAIKYMHDNGVIHRDLKPENILLDDKMRIQITDFGTARLLEKKNDESEEYPVDVRAKSFVGTAEYVSPELLENKYCGKPGDVWAFGCIIYQMIAGKPPFKATNEYLTFQKITKLQFAFSAGFPTIIRDLIKKILVLQPSRRATIPEIQKHYFFQSVDFKDFDSIWLSDPPEIGPYKMTAKSMMKVPELNKAPITTVIKKNVKKSTNSNSNTNNVATAVGGSSSNGHKGSSPTPEKEPSPATINNKSTEKVSAASVAAYVLNKPATNQNSSTSEDSSKRSSNSNETRKLSYSQQDYIPGTNILRPQISTRPSVGSYVKTTPSKDRKTLTKVPSNIHQQQEKVKPKVMEVKPATTLEAAWEPYLTHPDERILRIGPVIAHKEPTEPFEKKNKASLHISPLDINKEQRSRSNTSLLTQIVNEVNNNTSELKKVENADESLAIIEPQYNMKRSPTSDSKKSMDIERSASTSGSRISKKAIFKKLGFSHLEKNDSEESNGPSLTEKPQTCTLVVTTHGRALLFIRNDIESNYLLIAEIKLKYPFIHFQELVISQTKFSKLVPSVGVFVISSIDNSLIFEVEKFEVNQWTEALAKSKYNEIGKR.

Over residues 1–14 the composition is skewed to basic residues; the sequence is MHKFRYSLHQHYSK. Disordered stretches follow at residues 1-43, 108-132, and 162-212; these read MHKF…SSSS, SLGN…LSSH, and FNHL…NEEN. Residues 108-117 show a composition bias toward polar residues; it reads SLGNTTNETG. The span at 187 to 198 shows a compositional bias: acidic residues; sequence NTEEEENNDDTD. Positions 199-212 are enriched in basic and acidic residues; it reads EIPKSETLKQNEEN. Positions 240–502 constitute a Protein kinase domain; sequence FKFGKELGEG…IPEIQKHYFF (263 aa). ATP is bound by residues 250–252 and K269; that span reads SYS. Residues 271-316 are PIF-pocket; sequence LDKRHIIKEKKVKYVNIEKHALNRLSNRLGVISLYFTFQDKDSLYF. ATP-binding positions include 319-321 and E325; that span reads DYA. The Proton acceptor role is filled by D364. ATP contacts are provided by E368 and D382. Low complexity-rich tracts occupy residues 550-579 and 618-632; these read VKKS…KGSS and SSTS…SNSN. 4 disordered regions span residues 550-598, 611-644, 660-686, and 794-816; these read VKKS…STEK, KPAT…QQDY, SVGS…IHQQ, and NMKR…ASTS. Over residues 802–811 the composition is skewed to basic and acidic residues; that stretch reads DSKKSMDIER.

The protein belongs to the protein kinase superfamily. AGC Ser/Thr protein kinase family. PDPK1 subfamily.

It localises to the nucleus. It is found in the cytoplasm. Its subcellular location is the cell cortex. It carries out the reaction L-seryl-[protein] + ATP = O-phospho-L-seryl-[protein] + ADP + H(+). It catalyses the reaction L-threonyl-[protein] + ATP = O-phospho-L-threonyl-[protein] + ADP + H(+). Its function is as follows. Serine/threonine-protein kinase which is part sphingolipid-mediated signaling pathway that is required for the internalization step of endocytosis by regulating eisosome assembly and organization, and modulating the organization of the plasma membrane. Phosphorylates and activates PKC1. Activates YPK1 and YPK2, 2 components of signaling cascade required for maintenance of cell wall integrity. Required for stress-induced P-body assembly and regulates global mRNA decay at the deadenylation step. The chain is Serine/threonine-protein kinase PKH2 from Candida albicans (strain SC5314 / ATCC MYA-2876) (Yeast).